A 316-amino-acid chain; its full sequence is ATP synthase gamma chain (316 aa).

Belongs to the ATPase gamma chain family. As to quaternary structure, F-type ATPases have 2 components, CF(1) - the catalytic core - and CF(0) - the membrane proton channel. CF(1) has five subunits: alpha(3), beta(3), gamma(1), delta(1), epsilon(1). CF(0) has three main subunits: a, b and c.

The protein localises to the cellular thylakoid membrane. Produces ATP from ADP in the presence of a proton gradient across the membrane. The gamma chain is believed to be important in regulating ATPase activity and the flow of protons through the CF(0) complex. In Synechococcus elongatus (strain ATCC 33912 / PCC 7942 / FACHB-805) (Anacystis nidulans R2), this protein is ATP synthase gamma chain.